Reading from the N-terminus, the 213-residue chain is Transmembrane emp24 domain-containing protein p24delta8 (213 aa).

Positions Met1–Ser22 are cleaved as a signal peptide. The Lumenal portion of the chain corresponds to Met23–Lys180. The 117-residue stretch at Thr32–Thr148 folds into the GOLD domain. The N-linked (GlcNAc...) asparagine glycan is linked to Asn97. The stretch at Leu163–Ser176 forms a coiled coil. Arg166 carries the omega-N-methylated arginine modification. Asn174 is a glycosylation site (N-linked (GlcNAc...) asparagine). Residues Met181 to Leu203 traverse the membrane as a helical segment. Positions His202–Ile213 are interaction with ARF1. Residues Lys204 to Ile213 are Cytoplasmic-facing. A COPII vesicle coat-binding motif is present at residues Phe206–Phe207. The COPI vesicle coat-binding motif lies at Phe206–Ile213.

This sequence belongs to the EMP24/GP25L family. As to quaternary structure, probably oligomerizes with other members of the EMP24/GP25L family. Associates with the COPI vesicle coat (coatomer). Associates with the COPII vesicle coat (coatomer). Interacts with ARF1 (GDP-bound).

It is found in the endoplasmic reticulum membrane. The protein resides in the golgi apparatus. Its subcellular location is the cis-Golgi network membrane. The protein localises to the golgi stack membrane. Functionally, involved in vesicular protein trafficking. Mainly functions in the early secretory pathway. Thought to act as cargo receptor at the lumenal side for incorporation of secretory cargo molecules into transport vesicles and to be involved in vesicle coat formation at the cytoplasmic side. On Golgi membranes, acts as a primary receptor for ARF1-GDP which is involved in COPI-vesicle formation. The polypeptide is Transmembrane emp24 domain-containing protein p24delta8 (Arabidopsis thaliana (Mouse-ear cress)).